Consider the following 775-residue polypeptide: Mitosis inducer protein kinase cdr2 (775 aa).

A Protein kinase domain is found at 10–262 (WELGLSLGSG…MEQIREHPFL (253 aa)). ATP contacts are provided by residues 16–24 (LGSGGPNSS) and Lys-39. Asp-133 acts as the Proton acceptor in catalysis. 3 positions are modified to phosphoserine: Ser-309, Ser-311, and Ser-476. Positions 549–563 (NNIDNNNYNQPYANA) are enriched in low complexity. The segment at 549–620 (NNIDNNNYNQ…TKKKLSGSPF (72 aa)) is disordered. Residues 584 to 593 (LSQSPASYDS) show a composition bias toward polar residues. Phosphoserine is present on residues Ser-587 and Ser-632.

Belongs to the protein kinase superfamily. CAMK Ser/Thr protein kinase family. NIM1 subfamily. As to quaternary structure, interacts with blt1 and mid1. In terms of processing, autophosphorylated.

The enzyme catalyses L-seryl-[protein] + ATP = O-phospho-L-seryl-[protein] + ADP + H(+). The catalysed reaction is L-threonyl-[protein] + ATP = O-phospho-L-threonyl-[protein] + ADP + H(+). Acts as a mitotic inducer. In G2 it negatively regulates wee1, a mitotic inhibitor. Also has a role in cytokinesis where it required for proper septum formation. This chain is Mitosis inducer protein kinase cdr2 (cdr2), found in Schizosaccharomyces pombe (strain 972 / ATCC 24843) (Fission yeast).